We begin with the raw amino-acid sequence, 776 residues long: DNA ligase (776 aa).

NAD(+) contacts are provided by residues 31-35, 80-81, and E112; these read DAEYD and SL. The active-site N6-AMP-lysine intermediate is K114. R135, E172, K288, and K312 together coordinate NAD(+). Zn(2+) is bound by residues C406, C409, C436, and C442. A BRCT domain is found at 693–776; it reads AEGLPLAGQT…TFLAEQGIAV (84 aa).

The protein belongs to the NAD-dependent DNA ligase family. LigA subfamily. Requires Mg(2+) as cofactor. Mn(2+) serves as cofactor.

The catalysed reaction is NAD(+) + (deoxyribonucleotide)n-3'-hydroxyl + 5'-phospho-(deoxyribonucleotide)m = (deoxyribonucleotide)n+m + AMP + beta-nicotinamide D-nucleotide.. Functionally, DNA ligase that catalyzes the formation of phosphodiester linkages between 5'-phosphoryl and 3'-hydroxyl groups in double-stranded DNA using NAD as a coenzyme and as the energy source for the reaction. It is essential for DNA replication and repair of damaged DNA. The protein is DNA ligase of Pseudomonas putida (strain ATCC 47054 / DSM 6125 / CFBP 8728 / NCIMB 11950 / KT2440).